The following is a 470-amino-acid chain: Peripherin (470 aa).

Residues 1-99 (MSHHPSGLRA…FLATRSNEKQ (99 aa)) are head. 3'-nitrotyrosine is present on Tyr17. Residues Ser28, Ser50, and Ser59 each carry the phosphoserine modification. Residues 97–407 (EKQELQELND…KLLEGEESRI (311 aa)) form the IF rod domain. The tract at residues 100–132 (ELQELNDRFANFIEKVRFLEQQNAALRGELSQA) is coil 1A. The tract at residues 133-143 (RGQEPARADQL) is linker 1. The interval 144-239 (CQQELRELRR…KLHEEELRDL (96 aa)) is coil 1B. The interval 240 to 262 (QVSVESQQVQQVEVEATVKPELT) is linker 2. A coil 2 region spans residues 263-405 (AALRDIRAQY…YRKLLEGEES (143 aa)). At Tyr379 the chain carries 3'-nitrotyrosine. Residues 406-470 (RISVPVHSFA…ELDKSSAHSY (65 aa)) are tail. A disordered region spans residues 447–470 (NGEVVTESQKEQRSELDKSSAHSY). Residues 454–470 (SQKEQRSELDKSSAHSY) show a composition bias toward basic and acidic residues. Residue Tyr470 is modified to Phosphotyrosine.

It belongs to the intermediate filament family. As to quaternary structure, forms homodimers (in vitro). Homopolymerizes into a filamentous network (in vitro). Forms heterodimers with NEFL, NEFM or NEFH (in vitro). Interacts with DST (via C-terminus). Interacts with RAB7A; the interaction is direct. Interacts with PRKCE (via phorbol-ester/DAG-type 2 domain). Post-translationally, phosphorylated; phosphorylation increases after nerve injury in regenerating neurons. As to expression, expressed in the neurons of the outer hair cells in the organ of Corti and to a lesser extent in type I spiral ganglion cells.

It localises to the cytoplasm. The protein resides in the cytoskeleton. The protein localises to the cell projection. Its subcellular location is the axon. It is found in the perikaryon. In terms of biological role, class-III neuronal intermediate filament protein. May form an independent structural network without the involvement of other neurofilaments or may cooperate with the neuronal intermediate filament proteins NEFL, NEFH, NEFM and INA to form a filamentous network. Assembly of the neuronal intermediate filaments may be regulated by RAB7A. Plays a role in the development of unmyelinated sensory neurons. May be involved in axon elongation and axon regeneration after injury. Inhibits neurite extension in type II spiral ganglion neurons in the cochlea. This Homo sapiens (Human) protein is Peripherin (PRPH).